The chain runs to 390 residues: EF-hand calcium-binding domain-containing protein 4A (390 aa).

Low complexity predominate over residues 1–27 (MSPRSTLRSPLPSRTARSSASSDTPSP). A disordered region spans residues 1–37 (MSPRSTLRSPLPSRTARSSASSDTPSPGADRQDRMSK). EF-hand domains lie at 33–66 (DRMSKAKELFVLCDKEGKGFITKRDMQRLQQELP) and 67–102 (LSPEQLESVFESLDRDRNGYLTPLEFHTGLGELVGS). Residues D80, D82, N84, Y86, and E91 each contribute to the Ca(2+) site. A coiled-coil region spans residues 173-357 (SHLQDALKEK…DDKDAHQAQK (185 aa)). Positions 206–234 (DMESQLKEERERRQALDSMRQGDKKEQLL) are disordered.

The protein belongs to the EFCAB4 family.

This Danio rerio (Zebrafish) protein is EF-hand calcium-binding domain-containing protein 4A (cracr2b).